Consider the following 313-residue polypeptide: MDNKKRLAYAIIRFLHDQLRHGELSSDAQESLEVAIQCLETAFGVTVEDSDLALPQTLPEIFEAAAAGKELPPDLRSPQETPPSEEDSAEAERLKTEGNEQMKVENFEAAVHFYGKAIELNPANAVYFCNRAAAYSKLGNYAGAVQDCERAICIDPSYSKAYGRMGLALSSLNKHTEAVAYYRKALELDPDNETYKSNLKVAELRLREAPSPTGGVGSFDIAGLLNNPSFMSMASNLMNNPQVQQLMSGMISGGHNPLGTPGTSPSQNDLASLIQAGQQFAQQMQQQNPELIEQLRSQIRSRTPSASNDDQQE.

The tract at residues 69-97 (KELPPDLRSPQETPPSEEDSAEAERLKTE) is disordered. A Phosphoserine modification is found at S77. Residue T81 is modified to Phosphothreonine. Residue S84 is modified to Phosphoserine. TPR repeat units follow at residues 91–124 (AERLKTEGNEQMKVENFEAAVHFYGKAIELNPAN), 125–158 (AVYFCNRAAAYSKLGNYAGAVQDCERAICIDPSY), and 159–192 (SKAYGRMGLALSSLNKHTEAVAYYRKALELDPDN). K137 carries the post-translational modification N6-acetyllysine. S301 is subject to Phosphoserine. T303 carries the post-translational modification Phosphothreonine. S305 carries the post-translational modification Phosphoserine.

The protein belongs to the SGT family. Homodimer. Homooligomer. Interacts with DNAJC5 and DNAJC5B. Interacts (via TPR repeats) with HSP90AA1. Interacts (via Gln-rich region) with SLC2A1. Interacts with HSP90AB1. Interacts (via TPR repeats) with HSPA8/Hsc70; the interaction is direct. Interacts with BAG6 (via ubiquitin-like domain); interaction prevents interaction between BAG6 and RNF126. Forms a multiprotein complex, at least composed of DNAJB12, DNAJB14, HSPA8/Hsc70 and SGTA; interaction with DNAJB14 and HSPA8/Hsc70 is direct.

It localises to the cytoplasm. Its subcellular location is the nucleus. Co-chaperone that binds misfolded and hydrophobic patches-containing client proteins in the cytosol. Mediates their targeting to the endoplasmic reticulum but also regulates their sorting to the proteasome when targeting fails. Functions in tail-anchored/type II transmembrane proteins membrane insertion constituting with ASNA1 and the BAG6 complex a targeting module. Functions upstream of the BAG6 complex and ASNA1, binding more rapidly the transmembrane domain of newly synthesized proteins. It is also involved in the regulation of the endoplasmic reticulum-associated misfolded protein catabolic process via its interaction with BAG6: collaborates with the BAG6 complex to maintain hydrophobic substrates in non-ubiquitinated states. Competes with RNF126 for interaction with BAG6, preventing the ubiquitination of client proteins associated with the BAG6 complex. Binds directly to HSC70 and HSP70 and regulates their ATPase activity. The sequence is that of Small glutamine-rich tetratricopeptide repeat-containing protein alpha (SGTA) from Bos taurus (Bovine).